Here is a 301-residue protein sequence, read N- to C-terminus: J domain-containing protein 1 (301 aa).

The J domain maps to T58 to R150. Residues W208–A228 form a helical membrane-spanning segment.

Belongs to the DnaJ family.

Its subcellular location is the mitochondrion membrane. Probable chaperone. This Saccharomyces cerevisiae (strain ATCC 204508 / S288c) (Baker's yeast) protein is J domain-containing protein 1 (JID1).